The following is a 431-amino-acid chain: 5-methylthioadenosine/S-adenosylhomocysteine deaminase (431 aa).

Residues H61 and H63 each contribute to the Zn(2+) site. 2 residues coordinate substrate: E90 and H183. A Zn(2+)-binding site is contributed by H210. The substrate site is built by E213 and D298. D298 contributes to the Zn(2+) binding site.

Belongs to the metallo-dependent hydrolases superfamily. MTA/SAH deaminase family. The cofactor is Zn(2+).

It carries out the reaction S-adenosyl-L-homocysteine + H2O + H(+) = S-inosyl-L-homocysteine + NH4(+). The enzyme catalyses S-methyl-5'-thioadenosine + H2O + H(+) = S-methyl-5'-thioinosine + NH4(+). Functionally, catalyzes the deamination of 5-methylthioadenosine and S-adenosyl-L-homocysteine into 5-methylthioinosine and S-inosyl-L-homocysteine, respectively. Is also able to deaminate adenosine. This chain is 5-methylthioadenosine/S-adenosylhomocysteine deaminase, found in Halobacterium salinarum (strain ATCC 700922 / JCM 11081 / NRC-1) (Halobacterium halobium).